A 659-amino-acid chain; its full sequence is 3-hydroxypropionyl-coenzyme A synthetase (659 aa).

Residue D525 is part of the active site. N6-acetyllysine is present on K616.

It belongs to the ATP-dependent AMP-binding enzyme family.

The catalysed reaction is 3-hydroxypropanoate + ATP + CoA = 3-hydroxypropanoyl-CoA + AMP + diphosphate. Its function is as follows. Plays a role in the autotrophic CO(2) fixation pathway. Activates 3-hydroxypropionate to its CoA ester. Can also activate propionate, and to a lesser extent acrylate, acetate and butyrate. The chain is 3-hydroxypropionyl-coenzyme A synthetase from Sulfurisphaera tokodaii (strain DSM 16993 / JCM 10545 / NBRC 100140 / 7) (Sulfolobus tokodaii).